A 258-amino-acid polypeptide reads, in one-letter code: Regulatory protein RecX (258 aa).

It belongs to the RecX family.

It localises to the cytoplasm. In terms of biological role, modulates RecA activity. This chain is Regulatory protein RecX, found in Streptococcus pyogenes serotype M5 (strain Manfredo).